Reading from the N-terminus, the 439-residue chain is Probable anion transporter 7 (439 aa).

An N-terminal signal peptide occupies residues 1–28 (MTALTRMKFPKRYVIVLLTFICTNVCYI). 11 consecutive transmembrane segments (helical) span residues 53 to 73 (MILS…GWAA), 81 to 101 (VLLL…LDPK), 104 to 124 (VILV…FPAI), 143 to 163 (LTTS…PSLV), 167 to 187 (GAQS…VIWL), 232 to 252 (IIFS…HYAL), 280 to 300 (LPYF…DHLI), 312 to 332 (KLLN…LPLF), 338 to 358 (TVLC…GFAV), 367 to 387 (FAGI…IVGV), and 412 to 432 (TVFF…LIFS).

Belongs to the major facilitator superfamily. Sodium/anion cotransporter (TC 2.A.1.14) family.

It localises to the cell membrane. Functionally, probable anion transporter. This chain is Probable anion transporter 7 (PHT4;7), found in Oryza sativa subsp. japonica (Rice).